Consider the following 187-residue polypeptide: Adenine phosphoribosyltransferase (187 aa).

Belongs to the purine/pyrimidine phosphoribosyltransferase family. As to quaternary structure, homodimer.

Its subcellular location is the cytoplasm. It catalyses the reaction AMP + diphosphate = 5-phospho-alpha-D-ribose 1-diphosphate + adenine. Its pathway is purine metabolism; AMP biosynthesis via salvage pathway; AMP from adenine: step 1/1. Catalyzes a salvage reaction resulting in the formation of AMP, that is energically less costly than de novo synthesis. In Burkholderia pseudomallei (strain 668), this protein is Adenine phosphoribosyltransferase.